Here is an 808-residue protein sequence, read N- to C-terminus: Receptor like protein 27 (808 aa).

An N-terminal signal peptide occupies residues M1–G31. Over L32–K740 the chain is Extracellular. Residues N56, N68, N90, N103, N108, N144, and N167 are each glycosylated (N-linked (GlcNAc...) asparagine). 12 LRR repeats span residues L96–N120, N122–N144, L145–K170, S172–L192, P193–S218, L220–L241, I242–S265, F266–P291, N293–L314, T315–L338, R340–N363, and S364–I387. N213 carries an N-linked (GlcNAc...) asparagine glycan. N-linked (GlcNAc...) asparagine glycosylation is present at N313. An N-linked (GlcNAc...) asparagine glycan is attached at N363. Residues N388–N407 form an LRR 13; degenerate repeat. N-linked (GlcNAc...) asparagine glycans are attached at residues N394, N407, and N420. 10 LRR repeats span residues R408–E434, L436–D456, G457–C481, M483–A504, L505–P529, F532–N556, L601–L625, K626–V649, T650–L673, and F675–G698. N480 carries N-linked (GlcNAc...) asparagine glycosylation. An N-linked (GlcNAc...) asparagine glycan is attached at N544. N-linked (GlcNAc...) asparagine glycans are attached at residues N632 and N648. A helical transmembrane segment spans residues A741–A761. The Cytoplasmic portion of the chain corresponds to S762–M808.

Belongs to the RLP family.

The protein resides in the cell membrane. The sequence is that of Receptor like protein 27 from Arabidopsis thaliana (Mouse-ear cress).